The chain runs to 248 residues: ATP synthase subunit a (248 aa).

6 helical membrane-spanning segments follow: residues 25-45 (IAFT…AVMM), 83-103 (FFPL…VGII), 113-133 (LIVT…YGLA), 142-162 (LFVP…IEVI), 192-212 (FIAM…LPLG), and 215-235 (IALT…FAIL).

Belongs to the ATPase A chain family. As to quaternary structure, F-type ATPases have 2 components, CF(1) - the catalytic core - and CF(0) - the membrane proton channel. CF(1) has five subunits: alpha(3), beta(3), gamma(1), delta(1), epsilon(1). CF(0) has four main subunits: a, b, b' and c.

It localises to the cell inner membrane. In terms of biological role, key component of the proton channel; it plays a direct role in the translocation of protons across the membrane. The chain is ATP synthase subunit a from Rhodopseudomonas palustris (strain HaA2).